The sequence spans 186 residues: Shikimate kinase (186 aa).

15-20 (GAGKTT) is an ATP binding site. Thr19 contacts Mg(2+). 3 residues coordinate substrate: Asp37, Arg61, and Gly83. An ATP-binding site is contributed by Arg121. Position 140 (Arg140) interacts with substrate.

This sequence belongs to the shikimate kinase family. Monomer. Mg(2+) is required as a cofactor.

It localises to the cytoplasm. The enzyme catalyses shikimate + ATP = 3-phosphoshikimate + ADP + H(+). It participates in metabolic intermediate biosynthesis; chorismate biosynthesis; chorismate from D-erythrose 4-phosphate and phosphoenolpyruvate: step 5/7. In terms of biological role, catalyzes the specific phosphorylation of the 3-hydroxyl group of shikimic acid using ATP as a cosubstrate. The sequence is that of Shikimate kinase from Psychrobacter cryohalolentis (strain ATCC BAA-1226 / DSM 17306 / VKM B-2378 / K5).